A 185-amino-acid chain; its full sequence is Thiol:disulfide interchange protein DsbE (185 aa).

The Cytoplasmic portion of the chain corresponds to 1-4 (MKRN). The helical transmembrane segment at 5 to 25 (VLLLPLLIFLLIAAALLWQLA) threads the bilayer. Residues 26–185 (RNAQGDDPTN…WDRYSREAAQ (160 aa)) lie on the Periplasmic side of the membrane. The Thioredoxin domain maps to 39 to 177 (ALTGKPVPAF…WESELKPLWD (139 aa)). The cysteines at positions 80 and 83 are disulfide-linked.

Belongs to the thioredoxin family. DsbE subfamily.

It is found in the cell inner membrane. In terms of biological role, involved in disulfide bond formation. Catalyzes a late, reductive step in the assembly of periplasmic c-type cytochromes, probably the reduction of disulfide bonds of the apocytochrome c to allow covalent linkage with the heme. Possible subunit of a heme lyase. This chain is Thiol:disulfide interchange protein DsbE (dsbE1), found in Salmonella typhi.